A 605-amino-acid chain; its full sequence is Isocitrate dehydrogenase kinase/phosphatase (605 aa).

Residues 327–333 (APGIKGL) and Lys-348 each bind ATP. The active site involves Asp-383.

This sequence belongs to the AceK family.

The protein localises to the cytoplasm. The enzyme catalyses L-seryl-[isocitrate dehydrogenase] + ATP = O-phospho-L-seryl-[isocitrate dehydrogenase] + ADP + H(+). Bifunctional enzyme which can phosphorylate or dephosphorylate isocitrate dehydrogenase (IDH) on a specific serine residue. This is a regulatory mechanism which enables bacteria to bypass the Krebs cycle via the glyoxylate shunt in response to the source of carbon. When bacteria are grown on glucose, IDH is fully active and unphosphorylated, but when grown on acetate or ethanol, the activity of IDH declines drastically concomitant with its phosphorylation. This Burkholderia orbicola (strain MC0-3) protein is Isocitrate dehydrogenase kinase/phosphatase.